The following is a 121-amino-acid chain: Large ribosomal subunit protein uL14 (121 aa).

Belongs to the universal ribosomal protein uL14 family. Part of the 50S ribosomal subunit. Forms a cluster with proteins L3 and L19. In the 70S ribosome, L14 and L19 interact and together make contacts with the 16S rRNA in bridges B5 and B8.

Functionally, binds to 23S rRNA. Forms part of two intersubunit bridges in the 70S ribosome. The sequence is that of Large ribosomal subunit protein uL14 from Prochlorococcus marinus (strain MIT 9303).